The following is a 656-amino-acid chain: UvrABC system protein C (656 aa).

The GIY-YIG domain maps to 41-120 (KSSGCYLFKD…IKTNKPYFNI (80 aa)). The UVR domain maps to 230–265 (DDLEVFLERKMNQYSNDLEFENAAKIRDQISGLKLL).

Belongs to the UvrC family. As to quaternary structure, interacts with UvrB in an incision complex.

It localises to the cytoplasm. Its function is as follows. The UvrABC repair system catalyzes the recognition and processing of DNA lesions. UvrC both incises the 5' and 3' sides of the lesion. The N-terminal half is responsible for the 3' incision and the C-terminal half is responsible for the 5' incision. This Prochlorococcus marinus subsp. pastoris (strain CCMP1986 / NIES-2087 / MED4) protein is UvrABC system protein C.